Consider the following 266-residue polypeptide: Aquaporin TIP3-2 (266 aa).

Transmembrane regions (helical) follow at residues 29–49 (AAISEFIATAIFVFAAEGSVL) and 66–86 (GLVAVALAHALGLAVAVAVAV). The NPA 1 motif lies at 94–96 (NPA). 3 helical membrane passes run 109-129 (LVRAVLYWAAQLLGAVAATLL), 153-173 (AVLLEAVMTFGFVYAYYATVV), and 180-200 (LGTIAPLAVGFLLGANVLAGG). An NPA 2 motif is present at residues 208-210 (NPA). A helical transmembrane segment spans residues 228–248 (YWLGPFLGAGLAGLVYEYLLI).

The protein belongs to the MIP/aquaporin (TC 1.A.8) family. TIP (TC 1.A.8.10) subfamily.

The protein resides in the vacuole membrane. Aquaporins facilitate the transport of water and small neutral solutes across cell membranes. This chain is Aquaporin TIP3-2 (TIP3-2), found in Zea mays (Maize).